A 98-amino-acid chain; its full sequence is ATP-dependent Clp protease adapter protein ClpS (98 aa).

The protein belongs to the ClpS family. Binds to the N-terminal domain of the chaperone ClpA.

Functionally, involved in the modulation of the specificity of the ClpAP-mediated ATP-dependent protein degradation. This is ATP-dependent Clp protease adapter protein ClpS from Synechocystis sp. (strain ATCC 27184 / PCC 6803 / Kazusa).